Consider the following 195-residue polypeptide: Molybdenum cofactor guanylyltransferase (195 aa).

GTP contacts are provided by residues 10–12, lysine 23, asparagine 51, aspartate 69, and aspartate 99; that span reads LAG. Aspartate 99 provides a ligand contact to Mg(2+).

Belongs to the MobA family. As to quaternary structure, monomer. Mg(2+) is required as a cofactor.

The protein resides in the cytoplasm. It carries out the reaction Mo-molybdopterin + GTP + H(+) = Mo-molybdopterin guanine dinucleotide + diphosphate. Transfers a GMP moiety from GTP to Mo-molybdopterin (Mo-MPT) cofactor (Moco or molybdenum cofactor) to form Mo-molybdopterin guanine dinucleotide (Mo-MGD) cofactor. This Yersinia pestis bv. Antiqua (strain Antiqua) protein is Molybdenum cofactor guanylyltransferase.